A 98-amino-acid chain; its full sequence is Small ribosomal subunit protein uS19c (98 aa).

The protein belongs to the universal ribosomal protein uS19 family.

The protein resides in the plastid. It is found in the chloroplast. Its function is as follows. Protein S19 forms a complex with S13 that binds strongly to the 16S ribosomal RNA. In Jasminum nudiflorum (Winter jasmine), this protein is Small ribosomal subunit protein uS19c.